Reading from the N-terminus, the 51-residue chain is uncharacterized protein (51 aa).

A coiled-coil region spans residues 3 to 30 (EEKAVSLAKEIIELDIKRDEMLETFMQL).

This is an uncharacterized protein from Bacillus subtilis (strain 168).